A 211-amino-acid chain; its full sequence is Redox-sensing transcriptional repressor Rex (211 aa).

The segment at residues 18–57 (LYYRFIESLHAAGKQRVSSTELSQAVKVDSATIRRDFSYF) is a DNA-binding region (H-T-H motif). 92 to 97 (GVGNLG) serves as a coordination point for NAD(+).

It belongs to the transcriptional regulatory Rex family. Homodimer.

It is found in the cytoplasm. Its function is as follows. Modulates transcription in response to changes in cellular NADH/NAD(+) redox state. This Shouchella clausii (strain KSM-K16) (Alkalihalobacillus clausii) protein is Redox-sensing transcriptional repressor Rex.